Consider the following 152-residue polypeptide: NADH-quinone oxidoreductase subunit A 2 (152 aa).

3 helical membrane-spanning segments follow: residues 8-28 (FGKV…GYVS), 63-83 (FYVV…LFPW), and 90-110 (LGGF…LGLV).

This sequence belongs to the complex I subunit 3 family. In terms of assembly, NDH-1 is composed of 14 different subunits. Subunits NuoA, H, J, K, L, M, N constitute the membrane sector of the complex.

Its subcellular location is the cell inner membrane. It catalyses the reaction a quinone + NADH + 5 H(+)(in) = a quinol + NAD(+) + 4 H(+)(out). Functionally, NDH-1 shuttles electrons from NADH, via FMN and iron-sulfur (Fe-S) centers, to quinones in the respiratory chain. The immediate electron acceptor for the enzyme in this species is believed to be a menaquinone. Couples the redox reaction to proton translocation (for every two electrons transferred, four hydrogen ions are translocated across the cytoplasmic membrane), and thus conserves the redox energy in a proton gradient. The protein is NADH-quinone oxidoreductase subunit A 2 of Chloroherpeton thalassium (strain ATCC 35110 / GB-78).